The following is a 479-amino-acid chain: Ribulose bisphosphate carboxylase large chain (479 aa).

Residues 1-2 (MS) constitute a propeptide that is removed on maturation. Residues Asn123 and Thr173 each coordinate substrate. Lys175 functions as the Proton acceptor in the catalytic mechanism. Lys177 is a substrate binding site. Residues Lys201, Asp203, and Glu204 each contribute to the Mg(2+) site. Lys201 carries the N6-carboxylysine modification. Ser208 is subject to Phosphoserine. His294 (proton acceptor) is an active-site residue. 2 residues coordinate substrate: Arg295 and His327. At Thr330 the chain carries Phosphothreonine. Ser379 serves as a coordination point for substrate.

The protein belongs to the RuBisCO large chain family. Type I subfamily. Heterohexadecamer of 8 large chains and 8 small chains; disulfide-linked. The disulfide link is formed within the large subunit homodimers. It depends on Mg(2+) as a cofactor. Post-translationally, the disulfide bond which can form in the large chain dimeric partners within the hexadecamer appears to be associated with oxidative stress and protein turnover.

The protein localises to the plastid. It localises to the chloroplast. It carries out the reaction 2 (2R)-3-phosphoglycerate + 2 H(+) = D-ribulose 1,5-bisphosphate + CO2 + H2O. It catalyses the reaction D-ribulose 1,5-bisphosphate + O2 = 2-phosphoglycolate + (2R)-3-phosphoglycerate + 2 H(+). RuBisCO catalyzes two reactions: the carboxylation of D-ribulose 1,5-bisphosphate, the primary event in carbon dioxide fixation, as well as the oxidative fragmentation of the pentose substrate in the photorespiration process. Both reactions occur simultaneously and in competition at the same active site. The protein is Ribulose bisphosphate carboxylase large chain of Barbarea verna (Land cress).